Consider the following 734-residue polypeptide: Polyribonucleotide nucleotidyltransferase (734 aa).

2 residues coordinate Mg(2+): aspartate 497 and aspartate 503. Residues 564–623 enclose the KH domain; it reads PRIIHITIDPDKIRDVIGPGGKVIKKIVEETGAEIDIEDDGRVFIAAVDQEKGRKAQEII. The S1 motif domain maps to 633–707; it reads GEIYTGRVTR…SQGRLKLSKK (75 aa). Residues 700-734 form a disordered region; sequence GRLKLSKKEATPPPESTAMKEGRAHRPSRRRESAR. Residues 717–734 show a composition bias toward basic and acidic residues; it reads AMKEGRAHRPSRRRESAR.

This sequence belongs to the polyribonucleotide nucleotidyltransferase family. It depends on Mg(2+) as a cofactor.

It is found in the cytoplasm. The catalysed reaction is RNA(n+1) + phosphate = RNA(n) + a ribonucleoside 5'-diphosphate. Its function is as follows. Involved in mRNA degradation. Catalyzes the phosphorolysis of single-stranded polyribonucleotides processively in the 3'- to 5'-direction. The polypeptide is Polyribonucleotide nucleotidyltransferase (Pelotomaculum thermopropionicum (strain DSM 13744 / JCM 10971 / SI)).